Reading from the N-terminus, the 183-residue chain is UPF0302 protein BH1670 (183 aa).

The protein belongs to the UPF0302 family.

The polypeptide is UPF0302 protein BH1670 (Halalkalibacterium halodurans (strain ATCC BAA-125 / DSM 18197 / FERM 7344 / JCM 9153 / C-125) (Bacillus halodurans)).